The following is a 1029-amino-acid chain: U2 snRNP-associated SURP motif-containing protein (1029 aa).

Disordered regions lie at residues 1 to 110 (MADK…KEDE) and 141 to 273 (VNAA…DPST). An N-acetylalanine modification is found at Ala-2. Polar residues predominate over residues 7-16 (GGSQKASSKN). Residues 45–54 (TRPKSPRKHN) are compositionally biased toward basic residues. Basic and acidic residues predominate over residues 55–64 (YRNESSRESL). Ser-67 carries the post-translational modification Phosphoserine. Lys-80 participates in a covalent cross-link: Glycyl lysine isopeptide (Lys-Gly) (interchain with G-Cter in SUMO2). The stretch at 92–121 (AKRTLSKKEQEELKKKEDEKAAAEIYEEFL) forms a coiled coil. 2 stretches are compositionally biased toward basic and acidic residues: residues 97-110 (SKKE…KEDE) and 144-155 (AKDEHETDEKRG). Glycyl lysine isopeptide (Lys-Gly) (interchain with G-Cter in SUMO2) cross-links involve residues Lys-145 and Lys-168. Polar residues predominate over residues 169-178 (NPPNQSSNER). Basic and acidic residues predominate over residues 186–222 (ETKKPPLKKGEKEKKKSNLELFKEELKQIQEERDERH). Positions 192–232 (LKKGEKEKKKSNLELFKEELKQIQEERDERHKTKGRLSRFE) form a coiled coil. At Ser-202 the chain carries Phosphoserine. Residue Lys-208 forms a Glycyl lysine isopeptide (Lys-Gly) (interchain with G-Cter in SUMO2) linkage. Ser-236 is subject to Phosphoserine. Residues 239-249 (DGQRRSMDVPS) are compositionally biased toward basic and acidic residues. The RRM domain occupies 274–355 (TNLYLGNINP…FEMKLGWGKA (82 aa)). One copy of the SURP motif repeat lies at 430–473 (LIHRMIEFVVREGPMFEAMIMNREINNPMFRFLFENQTPAHVYY). Residue Ser-485 is modified to Phosphoserine. In terms of domain architecture, CID spans 534–679 (LKEEQRDKLE…KLQNIFLGLV (146 aa)). The interval 704-729 (DGAPLEDVDGIPIDATPIDDLDGVPI) is disordered. Position 719 is a phosphothreonine (Thr-719). Residues Lys-748 and Lys-749 each participate in a glycyl lysine isopeptide (Lys-Gly) (interchain with G-Cter in SUMO2) cross-link. An N6-acetyllysine; alternate modification is found at Lys-760. Lys-760 participates in a covalent cross-link: Glycyl lysine isopeptide (Lys-Gly) (interchain with G-Cter in SUMO2); alternate. Disordered stretches follow at residues 778–841 (KWEL…EEKR) and 855–1029 (QDEL…KNKH). A compositionally biased stretch (acidic residues) spans 786 to 806 (EESEEEENQNQEEESEDEEDT). Phosphoserine is present on residues Ser-788, Ser-800, and Ser-811. Basic and acidic residues-rich tracts occupy residues 810–841 (KSEE…EEKR) and 874–922 (QVEH…TPTR). Residues Lys-829 and Lys-832 each participate in a glycyl lysine isopeptide (Lys-Gly) (interchain with G-Cter in SUMO2) cross-link. Residues 837–915 (SEEKRAKLRE…ESRSKDKKEK (79 aa)) adopt a coiled-coil conformation. Thr-931 carries the phosphothreonine modification. 2 positions are modified to phosphoserine: Ser-946 and Ser-948. Basic and acidic residues predominate over residues 950-980 (KSERSERSERSHKESSRSRSSHKDSPRDASK). Over residues 991–1029 (TPKRSRRSRSRSPKKSGKKSRSQSRSPHRSHKKSKKNKH) the composition is skewed to basic residues.

It belongs to the splicing factor SR family. As to quaternary structure, interacts with ERBB4.

The protein localises to the nucleus. This Mus musculus (Mouse) protein is U2 snRNP-associated SURP motif-containing protein (U2surp).